Here is a 142-residue protein sequence, read N- to C-terminus: uncharacterized protein (142 aa).

The interval 1–22 (MSGSVNQNTDQHSQDSSSTPNN) is disordered. Transmembrane regions (helical) follow at residues 63-83 (LFVM…VLLV) and 109-129 (IIDG…FVDL).

Its subcellular location is the membrane. This is an uncharacterized protein from Acanthamoeba polyphaga mimivirus (APMV).